The primary structure comprises 156 residues: Nuclear cap-binding protein subunit 2 (156 aa).

Position 2 is an N-acetylserine (S2). S13 and S18 each carry phosphoserine. MRNA contacts are provided by residues Y20, Y43, 112-116 (RTDWD), 123-127 (RQYGR), and 133-134 (QV). Residues 40–118 (CTLYVGNLSF…RIIRTDWDAG (79 aa)) form the RRM domain. Positions 124 to 156 (QYGRGRSGGQVRDEYRQDYDAGRGGYGKLAQNQ) are disordered. Residues 134–144 (VRDEYRQDYDA) are compositionally biased toward basic and acidic residues. At R146 the chain carries Omega-N-methylarginine.

It belongs to the RRM NCBP2 family. Component of the nuclear cap-binding complex (CBC), a heterodimer composed of NCBP1/CBP80 and NCBP2/CBP20 that interacts with m7GpppG-capped RNA. Found in a U snRNA export complex with PHAX/RNUXA, NCBP1/CBP80, NCBP2/CBP20, RAN, XPO1 and m7G-capped RNA. Interacts with PHAX/RNUXA, EIF4G1, HNRNPF, HNRNPH1 and ALYREF/THOC4/ALY. Interacts with SRRT/ARS2 and KPNA3.

The protein resides in the nucleus. It localises to the cytoplasm. Functionally, component of the cap-binding complex (CBC), which binds co-transcriptionally to the 5' cap of pre-mRNAs and is involved in various processes such as pre-mRNA splicing, translation regulation, nonsense-mediated mRNA decay, RNA-mediated gene silencing (RNAi) by microRNAs (miRNAs) and mRNA export. The CBC complex is involved in mRNA export from the nucleus via its interaction with ALYREF/THOC4/ALY, leading to the recruitment of the mRNA export machinery to the 5' end of mRNA and to mRNA export in a 5' to 3' direction through the nuclear pore. The CBC complex is also involved in mediating U snRNA and intronless mRNAs export from the nucleus. The CBC complex is essential for a pioneer round of mRNA translation, before steady state translation when the CBC complex is replaced by cytoplasmic cap-binding protein eIF4E. The pioneer round of mRNA translation mediated by the CBC complex plays a central role in nonsense-mediated mRNA decay (NMD), NMD only taking place in mRNAs bound to the CBC complex, but not on eIF4E-bound mRNAs. The CBC complex enhances NMD in mRNAs containing at least one exon-junction complex (EJC) via its interaction with UPF1, promoting the interaction between UPF1 and UPF2. The CBC complex is also involved in 'failsafe' NMD, which is independent of the EJC complex, while it does not participate in Staufen-mediated mRNA decay (SMD). During cell proliferation, the CBC complex is also involved in microRNAs (miRNAs) biogenesis via its interaction with SRRT/ARS2, thereby being required for miRNA-mediated RNA interference. The CBC complex also acts as a negative regulator of PARN, thereby acting as an inhibitor of mRNA deadenylation. In the CBC complex, NCBP2/CBP20 recognizes and binds capped RNAs (m7GpppG-capped RNA) but requires NCBP1/CBP80 to stabilize the movement of its N-terminal loop and lock the CBC into a high affinity cap-binding state with the cap structure. The conventional cap-binding complex with NCBP2 binds both small nuclear RNA (snRNA) and messenger (mRNA) and is involved in their export from the nucleus. In Bos taurus (Bovine), this protein is Nuclear cap-binding protein subunit 2 (NCBP2).